Reading from the N-terminus, the 356-residue chain is DNA polymerase IV (356 aa).

Positions 7–188 (IIHIDMDAFY…IPVTKFYGVG (182 aa)) constitute a UmuC domain. Positions 11 and 106 each coordinate Mg(2+). E107 is an active-site residue.

It belongs to the DNA polymerase type-Y family. As to quaternary structure, monomer. Mg(2+) is required as a cofactor.

Its subcellular location is the cytoplasm. It carries out the reaction DNA(n) + a 2'-deoxyribonucleoside 5'-triphosphate = DNA(n+1) + diphosphate. Poorly processive, error-prone DNA polymerase involved in untargeted mutagenesis. Copies undamaged DNA at stalled replication forks, which arise in vivo from mismatched or misaligned primer ends. These misaligned primers can be extended by PolIV. Exhibits no 3'-5' exonuclease (proofreading) activity. May be involved in translesional synthesis, in conjunction with the beta clamp from PolIII. This is DNA polymerase IV from Listeria monocytogenes serotype 4b (strain CLIP80459).